We begin with the raw amino-acid sequence, 301 residues long: uncharacterized protein (301 aa).

Active-site charge relay system residues include Ser-44 and Tyr-107. The Proton donor role is filled by Tyr-133. The active-site Schiff-base intermediate with substrate is the Lys-162.

Belongs to the DapA family. In terms of assembly, homotetramer.

The protein resides in the cytoplasm. This is an uncharacterized protein from Pyrobaculum aerophilum (strain ATCC 51768 / DSM 7523 / JCM 9630 / CIP 104966 / NBRC 100827 / IM2).